A 254-amino-acid chain; its full sequence is Ornithine decarboxylase antizyme (254 aa).

Belongs to the ODC antizyme family. Interacts with ODC1 and thereby sterically blocks ODC homodimerization.

Functionally, ornithine decarboxylase (ODC) antizyme protein that negatively regulates ODC activity and intracellular polyamine biosynthesis and uptake in response to increased intracellular polyamine levels. Binds to ODC monomers, inhibiting the assembly of the functional ODC homodimer, and targets the monomers for ubiquitin-independent proteolytic destruction by the 26S proteasome. Required for cellular differentiation in neuronal and myogenic lineages during embryonic development. The polypeptide is Ornithine decarboxylase antizyme (Oda) (Drosophila melanogaster (Fruit fly)).